We begin with the raw amino-acid sequence, 514 residues long: MEELQGYLEKDRSRQQHFLYPLLFKEYIYTFVHDRGLNSSVFYESTEIFGYDNKSSSVLVKRSIIRMYQQNYLIYSVNDSNQNRFVGHNNYFYFHFYSQMILEGFAVIVEIPFLLRLVSSLEEKKIPKSQNLNLRSIHSTFPFLEDKLSHLNYVSDILIPYPIHLKILVQILQFWIQDVPSLHLLRFFLHEYHNWNSLITPNNSIFLFSKENKRVFRFPYNSYVSECEFVLVFLRKQSSYLRVTSSGAFLERTHFYGKIEHRIVVRRNYFQKTLWFFKDPFMHYVRYQGKAILVSKGTHLLMKKWKCYLVNFWQYYFHFWSQPYRIHINQLSNCSFYFLGYLSSVLINPSAVRNQMLENSFLIDTVIKKFDTRVPVITLIGSLSKAKFCTVLGHPISKPIWTDLSDCDINDRFGRICRNLSHYHSGSSKKQSLYRIKYILRFSCAXTLARKHKSTVRAFLQRLGSGLLEEFFMKEEQVVSLIFPKTTSFSLHESHIERIWYLDIIHINDLVNYS.

Belongs to the intron maturase 2 family. MatK subfamily.

The protein localises to the plastid. The protein resides in the chloroplast. Its function is as follows. Usually encoded in the trnK tRNA gene intron. Probably assists in splicing its own and other chloroplast group II introns. The protein is Maturase K of Phoenix dactylifera (Date palm).